We begin with the raw amino-acid sequence, 366 residues long: Putative integrase/recombinase HI_1572 (366 aa).

Residues Ile54–Ile133 form the Core-binding (CB) domain. The 164-residue stretch at Ile168 to Ala331 folds into the Tyr recombinase domain. Catalysis depends on residues Arg201, Lys226, and His308. Tyr318 (O-(3'-phospho-DNA)-tyrosine intermediate) is an active-site residue.

This sequence belongs to the 'phage' integrase family.

The protein is Putative integrase/recombinase HI_1572 of Haemophilus influenzae (strain ATCC 51907 / DSM 11121 / KW20 / Rd).